Reading from the N-terminus, the 154-residue chain is UPF0260 protein NTHI1811 (154 aa).

This sequence belongs to the UPF0260 family.

The polypeptide is UPF0260 protein NTHI1811 (Haemophilus influenzae (strain 86-028NP)).